The following is a 323-amino-acid chain: Transaldolase (323 aa).

Catalysis depends on K133, which acts as the Schiff-base intermediate with substrate.

Belongs to the transaldolase family. Type 1 subfamily. As to quaternary structure, monomer.

The enzyme catalyses D-sedoheptulose 7-phosphate + D-glyceraldehyde 3-phosphate = D-erythrose 4-phosphate + beta-D-fructose 6-phosphate. It participates in carbohydrate degradation; pentose phosphate pathway; D-glyceraldehyde 3-phosphate and beta-D-fructose 6-phosphate from D-ribose 5-phosphate and D-xylulose 5-phosphate (non-oxidative stage): step 2/3. Its function is as follows. Transaldolase important for the balance of metabolites in the pentose-phosphate pathway. Involved in xylose fermentation to ethanol. The polypeptide is Transaldolase (Fusarium oxysporum f. sp. lycopersici (strain 4287 / CBS 123668 / FGSC 9935 / NRRL 34936) (Fusarium vascular wilt of tomato)).